Consider the following 303-residue polypeptide: N-acetyl-D-glucosamine kinase (303 aa).

Residues 4–11 (GFDIGGTK) and 133–140 (GVGGGLIF) each bind ATP. Zn(2+) contacts are provided by His-157, Cys-177, Cys-179, and Cys-184.

The protein belongs to the ROK (NagC/XylR) family. NagK subfamily.

It carries out the reaction N-acetyl-D-glucosamine + ATP = N-acetyl-D-glucosamine 6-phosphate + ADP + H(+). Its pathway is cell wall biogenesis; peptidoglycan recycling. Its function is as follows. Catalyzes the phosphorylation of N-acetyl-D-glucosamine (GlcNAc) derived from cell-wall degradation, yielding GlcNAc-6-P. The polypeptide is N-acetyl-D-glucosamine kinase (Escherichia coli O6:H1 (strain CFT073 / ATCC 700928 / UPEC)).